The following is a 178-amino-acid chain: Ribosome maturation factor RimM (178 aa).

One can recognise a PRC barrel domain in the interval 98-178 (DGEYYWNQLE…RILVDWDPEF (81 aa)).

This sequence belongs to the RimM family. As to quaternary structure, binds ribosomal protein uS19.

Its subcellular location is the cytoplasm. In terms of biological role, an accessory protein needed during the final step in the assembly of 30S ribosomal subunit, possibly for assembly of the head region. Essential for efficient processing of 16S rRNA. May be needed both before and after RbfA during the maturation of 16S rRNA. It has affinity for free ribosomal 30S subunits but not for 70S ribosomes. The protein is Ribosome maturation factor RimM of Cellvibrio japonicus (strain Ueda107) (Pseudomonas fluorescens subsp. cellulosa).